The sequence spans 258 residues: Ciliogenesis and planar polarity effector 2 (258 aa).

Positions 51–258 (IDTASYKIFV…LPSSPESAPG (208 aa)) are small GTPase-like. GTP contacts are provided by Ser-64, Gly-65, Gly-67, Lys-68, Thr-69, Ala-70, Ile-82, His-84, Thr-87, Lys-176, Asp-178, and Ser-206.

It belongs to the small GTPase superfamily. Rab family. As to quaternary structure, interacts with FUZ. Associates with the CPLANE (ciliogenesis and planar polarity effectors) complex via its interaction with FUZ.

The protein localises to the cytoplasm. Its subcellular location is the cytoskeleton. The protein resides in the cilium basal body. It localises to the microtubule organizing center. It is found in the centrosome. The protein localises to the centriole. In terms of biological role, required for efficient primary cilia initiation, regulating a late step in cilia initiation. Plays a role in the final maturation of the mother centriole and ciliary vesicle that allows extension of the ciliary axoneme. This is Ciliogenesis and planar polarity effector 2 (Cplane2) from Mus musculus (Mouse).